A 1170-amino-acid chain; its full sequence is Protein SCAR4 (1170 aa).

Disordered stretches follow at residues 180–207, 356–376, 631–674, 701–742, 783–819, 960–980, and 1026–1046; these read KLGK…EDSR, NDAD…SDDK, AAPK…PRDL, SYSG…NQTG, NQRQ…SSPL, EESK…SDTY, and HNNP…HPLE. A compositionally biased stretch (basic residues) spans 183–195; sequence KDKRLRQSKKKGS. Over residues 198–207 the composition is skewed to basic and acidic residues; the sequence is TIKETPEDSR. Over residues 356-365 the composition is skewed to polar residues; that stretch reads NDADSPASTE. Positions 366 to 376 are enriched in basic and acidic residues; that stretch reads SEVKEAGSDDK. 4 stretches are compositionally biased toward polar residues: residues 640–668, 701–716, 783–818, and 967–980; these read SQDG…TLMS, SYSG…IVSD, NQRQ…QSSP, and EQSP…SDTY. The region spanning 1105 to 1123 is the WH2 domain; the sequence is ENDSLLEIIRSKSFNLRPA.

It belongs to the SCAR/WAVE family. In terms of assembly, interacts with SPK1. As to expression, expressed in expanding cotyledons, expanding leaves and expanding siliques containing developing embryos. Detected in unopened flower buds and in the expanding tip region of roots. Reduced expression in mature leaves.

Its subcellular location is the cytoplasm. The protein localises to the cytoskeleton. Functionally, involved in regulation of actin and microtubule organization. Part of a WAVE complex that activates the Arp2/3 complex. Regulates trichome branch positioning and expansion. This chain is Protein SCAR4 (SCAR4), found in Arabidopsis thaliana (Mouse-ear cress).